Reading from the N-terminus, the 65-residue chain is Large ribosomal subunit protein bL35 (65 aa).

The tract at residues 1–22 is disordered; sequence MPKLKTKSGAAKRFKKTGKGGF.

It belongs to the bacterial ribosomal protein bL35 family.

The polypeptide is Large ribosomal subunit protein bL35 (Francisella philomiragia subsp. philomiragia (strain ATCC 25017 / CCUG 19701 / FSC 153 / O#319-036)).